The sequence spans 116 residues: MALKIRLRQQGRKNHVVYRLVLADVESPRDGKYIELLGWYDPHSEQNYQLKSERIFYWLNQGAELTEKAGALVKQGAPGVYAELMAKKNARRAVVRQKRRAYRQRLAARRAEAAAK.

It belongs to the bacterial ribosomal protein bS16 family.

The chain is Small ribosomal subunit protein bS16 from Chlamydia muridarum (strain MoPn / Nigg).